The primary structure comprises 111 residues: Cytochrome c6 (111 aa).

The first 25 residues, 1–25 (MKRLLSLIFLVFVFFAVMLTPPALA), serve as a signal peptide directing secretion. 4 residues coordinate heme c: Cys-39, Cys-42, His-43, and Met-83.

The protein belongs to the cytochrome c family. PetJ subfamily. As to quaternary structure, monomer. In terms of processing, binds 1 heme c group covalently per subunit.

It localises to the cellular thylakoid lumen. Functions as an electron carrier between membrane-bound cytochrome b6-f and photosystem I in oxygenic photosynthesis. The sequence is that of Cytochrome c6 from Rippkaea orientalis (strain PCC 8801 / RF-1) (Cyanothece sp. (strain PCC 8801)).